A 601-amino-acid polypeptide reads, in one-letter code: Somatic embryogenesis receptor kinase 5 (601 aa).

Residues 1–24 (MEHGSSRGFIWLILFLDFVSRVTG) form the signal peptide. Residues 25–215 (KTQVDALIAL…SPSPSPSGTS (191 aa)) lie on the Extracellular side of the membrane. Residues Asn-52, Asn-81, Asn-105, Asn-129, Asn-151, and Asn-184 are each glycosylated (N-linked (GlcNAc...) asparagine). LRR repeat units lie at residues 71–94 (SVTRLDLGSANLSGELVPQLAQLP), 95–118 (NLQYLELFNNNITGEIPEELGDLM), 119–141 (ELVSLDLFANNISGPIPSSLGKL), 143–165 (KLRFLRLYNNSLSGEIPRSLTAL), and 166–188 (PLDVLDISNNRLSGDIPVNGSFS). Residues 216 to 236 (AAIVVGVAAGAALLFALAWWL) form a helical membrane-spanning segment. Topologically, residues 237–601 (RRKLQGHFLD…IENDYPSGPR (365 aa)) are cytoplasmic. Thr-272 is modified (phosphothreonine). Residues 275–572 (FSKRNVLGKG…KEEMPIHDFN (298 aa)) enclose the Protein kinase domain. 281–289 (LGKGRFGIL) serves as a coordination point for ATP. Thr-298 bears the Phosphothreonine mark. Residue Lys-303 participates in ATP binding. Ser-356 and Ser-359 each carry phosphoserine. Asp-402 (proton acceptor) is an active-site residue. Phosphothreonine is present on residues Thr-435, Thr-436, and Thr-441. The residue at position 449 (Tyr-449) is a Phosphotyrosine. Position 451 is a phosphoserine (Ser-451). Phosphothreonine is present on Thr-452. 2 positions are modified to phosphoserine: Ser-456 and Ser-506. Thr-532 is modified (phosphothreonine).

This sequence belongs to the protein kinase superfamily. Ser/Thr protein kinase family. As to quaternary structure, interacts with TMK4/BARK1. In terms of processing, autophosphorylated.

The protein resides in the cell membrane. It catalyses the reaction L-seryl-[protein] + ATP = O-phospho-L-seryl-[protein] + ADP + H(+). It carries out the reaction L-threonyl-[protein] + ATP = O-phospho-L-threonyl-[protein] + ADP + H(+). Functionally, serine/threonine-kinase of unknown function. The sequence is that of Somatic embryogenesis receptor kinase 5 (SERK5) from Arabidopsis thaliana (Mouse-ear cress).